A 2643-amino-acid polypeptide reads, in one-letter code: Ankyrin repeat domain-containing protein 11 (2643 aa).

Disordered regions lie at residues 1 to 90 (MPKG…KEPV) and 128 to 170 (SANS…RGET). Basic and acidic residues-rich tracts occupy residues 21–54 (MVEK…VRER) and 69–90 (EQKD…KEPV). The span at 128 to 155 (SANSPVDTTPKHPSQSTVCQKGTPNSAS) shows a compositional bias: polar residues. A compositionally biased stretch (basic and acidic residues) spans 156-170 (KTKDKVNKRNERGET). ANK repeat units follow at residues 167–196 (RGET…DVNV), 200–229 (AGWT…EVNT), 233–262 (DDDT…NPQQ), and 266–292 (KGET…YTSS). Residue Ser-276 is modified to Phosphoserine. Residues 289-365 (YTSSEESSTE…DRVPPVDDKH (77 aa)) are disordered. Acidic residues predominate over residues 295–305 (SSTESSEEEDA). The segment covering 309–320 (APSSSVDGNNTD) has biased composition (polar residues). Composition is skewed to basic and acidic residues over residues 322-335 (EFEK…KNPE) and 356-365 (DRVPPVDDKH). Ser-408 bears the Phosphoserine mark. The residue at position 410 (Thr-410) is a Phosphothreonine. Position 411 is a phosphoserine (Ser-411). Disordered regions lie at residues 423–504 (GEKL…CLKG), 517–651 (SLSA…GQCS), and 727–805 (DANK…DKEK). Basic and acidic residues predominate over residues 438–451 (KARESSSSRQQKEK). A compositionally biased stretch (basic residues) spans 452 to 462 (NKLKKKRKKET). Over residues 463 to 475 (KGKEVRFGKRSDK) the composition is skewed to basic and acidic residues. Residues 484-494 (ESSESEEDDGD) are compositionally biased toward acidic residues. Low complexity predominate over residues 517–528 (SLSASSTSSHGS). Residues 537-550 (GHTDQHTKHWRTDN) are compositionally biased toward basic and acidic residues. Over residues 557–574 (PAWSEVSSLSDSSRTGLT) the composition is skewed to polar residues. The span at 575-588 (SESDCSSEGSSVES) shows a compositional bias: low complexity. 2 stretches are compositionally biased toward basic residues: residues 591–602 (PTRRKQEHRKRG) and 633–646 (VKKH…KHKE). Ser-838 is subject to Phosphoserine. 2 stretches are compositionally biased toward basic and acidic residues: residues 918–931 (KNSE…EKHK) and 938–962 (SEKD…IRSE). Disordered regions lie at residues 918–962 (KNSE…IRSE), 977–1037 (SFKD…STLD), and 1051–1074 (EKKD…FDQL). Ser-1070 carries the phosphoserine modification. Thr-1111 carries the phosphothreonine modification. Ser-1114 is subject to Phosphoserine. Disordered stretches follow at residues 1114 to 1388 (SEDE…KDAS) and 1420 to 1711 (LFSS…TPSC). 8 stretches are compositionally biased toward basic and acidic residues: residues 1133 to 1297 (DTQR…DKIS), 1326 to 1343 (AEDK…LREK), 1355 to 1388 (KSHE…KDAS), 1420 to 1444 (LFSS…KELK), 1464 to 1535 (RERW…KGDS), 1546 to 1564 (VPSR…KLLG), 1577 to 1587 (LSQKDLEIEER), and 1595 to 1640 (MKQM…KVKE). Ser-1676 carries the phosphoserine modification. Residues 1678–1695 (RTEQSRPTGVPTPTSVVS) are compositionally biased toward polar residues. Phosphoserine occurs at positions 1777 and 1832. Tyr-1835 and Tyr-1836 each carry phosphotyrosine. Ser-1837 and Ser-1844 each carry phosphoserine. Disordered stretches follow at residues 1863-1900 (PPDS…GLPL), 1981-2027 (SPKH…EVKD), and 2111-2386 (HEAF…STQQ). 2 positions are modified to phosphoserine: Ser-1981 and Ser-2139. 2 stretches are compositionally biased toward pro residues: residues 2150 to 2160 (PVPPAESPPGP) and 2175 to 2184 (EEPPAPPPQE). The segment covering 2273–2284 (SAEASCVVAAAE) has biased composition (low complexity). The segment covering 2297–2315 (PEPKPTSEVPKAPKVEEVP) has biased composition (basic and acidic residues). Residues 2349 to 2643 (AKGRASEEED…VNDDFVLLPA (295 aa)) are important for protein degradation. Positions 2371-2386 (RSSQQLQQQLNTSTQQ) are enriched in low complexity.

Interacts with the PAS region of the p160 coactivators. In terms of processing, subject to proteasomal degradation which is probably essential to regulate its activity.

The protein resides in the nucleus. In terms of biological role, chromatin regulator which modulates histone acetylation and gene expression in neural precursor cells. May recruit histone deacetylases (HDACs) to the p160 coactivators/nuclear receptor complex to inhibit ligand-dependent transactivation. Has a role in proliferation and development of cortical neural precursors. May also regulate bone homeostasis. The polypeptide is Ankyrin repeat domain-containing protein 11 (Mus musculus (Mouse)).